An 88-amino-acid polypeptide reads, in one-letter code: Small ribosomal subunit protein bS20 (88 aa).

Belongs to the bacterial ribosomal protein bS20 family.

Functionally, binds directly to 16S ribosomal RNA. The chain is Small ribosomal subunit protein bS20 from Clostridium botulinum (strain ATCC 19397 / Type A).